A 127-amino-acid polypeptide reads, in one-letter code: Apolipoprotein C-IV (127 aa).

Residues 1–27 (MSLLRNRLQDLPALCLCVLVLACIGAC) form the signal peptide.

Belongs to the apolipoprotein C4 family.

It localises to the secreted. In terms of biological role, may participate in lipoprotein metabolism. The sequence is that of Apolipoprotein C-IV (APOC4) from Papio hamadryas (Hamadryas baboon).